We begin with the raw amino-acid sequence, 66 residues long: Large ribosomal subunit protein bL31 (66 aa).

Zn(2+) is bound by residues Cys-16, Cys-18, Cys-36, and Cys-39.

This sequence belongs to the bacterial ribosomal protein bL31 family. Type A subfamily. As to quaternary structure, part of the 50S ribosomal subunit. Zn(2+) serves as cofactor.

Its function is as follows. Binds the 23S rRNA. In Thermodesulfovibrio yellowstonii (strain ATCC 51303 / DSM 11347 / YP87), this protein is Large ribosomal subunit protein bL31.